The chain runs to 133 residues: MARDFSRAQRVSQEMQKEIAIILQREVKDPRIGMATVSGVEISRDLAYAKVFVTFLNLSAGEESDEEMVENGLKALNEAAGFIRSLLGKAMRLRVVPELTFAYDNSLVEGMRMSNLVSNVVKDDEKRRHKEEE.

The protein belongs to the RbfA family. In terms of assembly, monomer. Binds 30S ribosomal subunits, but not 50S ribosomal subunits or 70S ribosomes.

Its subcellular location is the cytoplasm. Functionally, one of several proteins that assist in the late maturation steps of the functional core of the 30S ribosomal subunit. Associates with free 30S ribosomal subunits (but not with 30S subunits that are part of 70S ribosomes or polysomes). Required for efficient processing of 16S rRNA. May interact with the 5'-terminal helix region of 16S rRNA. This is Ribosome-binding factor A from Proteus mirabilis (strain HI4320).